Consider the following 163-residue polypeptide: uncharacterized protein (163 aa).

A disordered region spans residues 30–163 (GNENTSVSSD…IYKKLGKKKR (134 aa)). The span at 88–118 (ERQLQKKKEAEKIEGGKNHDNLKRKLNKVGD) shows a compositional bias: basic and acidic residues. Residues 119-133 (ELNEQQSDTDDDDDD) are compositionally biased toward acidic residues. S125 bears the Phosphoserine mark. Phosphothreonine is present on T127.

It localises to the nucleus. Its subcellular location is the nucleolus. This is an uncharacterized protein from Schizosaccharomyces pombe (strain 972 / ATCC 24843) (Fission yeast).